Here is a 950-residue protein sequence, read N- to C-terminus: Serine/threonine-protein phosphatase 4 regulatory subunit 1 (950 aa).

9 HEAT repeats span residues 1 to 25, 26 to 63, 65 to 81, 82 to 119, 127 to 164, 168 to 206, 208 to 246, 248 to 285, and 287 to 324; these read MADLSLLQEDLQEDADGFGVDDYSS, ESDVIIIPSALDFVSQDEMLTPLGRLDKYAASENIFNR, MVARSLLDTLREVCDDE, RDCIAVLERISRLADDSEPTVRAELMEQVPHIALFCQE, AFSKFLLPIVVRYLADQNNQVRKTSQAALLALLEQELI, DVETKVCPVLIELTAPDSNDDVKTEAVAIMCKMAPMVGK, ITERLILPRFCEMCCDCRMFHVRKVCAANFGDICSVVGQ, ATEEMLLPRFFQLCSDNVWGVRKACAECFMAVSCATCQ, and IRRTKLSALFINLISDPSRWVRQAAFQSLGPFISTFAN. Disordered stretches follow at residues 326–374, 413–438, and 473–499; these read SSSG…SVSN, ESHQEAASNENDKKPGNYKSMLRPEV, and EQNSGGKPSPEGPEEESEGPVPSSPNI. Residues 332-365 show a composition bias toward basic and acidic residues; it reads FKEESKSSEEMSVENKNRTRDQEAPEDVQVRPED. 5 HEAT repeats span residues 505–542, 568–606, 698–734, 799–837, and 861–898; these read KELEEMIENLEPHIDDPDVKAQVEVLSAALRASSLDAH, INQEDSVPLISDAVENMDSTLHYIHSDSDLSNNSSFSPD, LTAADLVPIFNGFLKDLDEVRIGVLKHLHDFLKLLHI, WISYKLVSEMVKKLHAATPPTFGVDLINELVENFGRCPK, and QFAVHLMPHLLTLANDRVPNVRVLLAKTLRQTLLEKDY. Residue serine 935 is modified to Phosphoserine.

Serine/threonine-protein phosphatase 4 (PP4) occurs in different assemblies of the catalytic and one or more regulatory subunits. Component of the PP4 complex PPP4C-PPP4R1. Interacts with HDAC3. In terms of assembly, (Microbial infection) Interacts with merkel polyomavirus small tumor antigen; this interaction bridges small tumor antigen with NEMO to inhibit NF-kappa-B. Widely expressed with high expression in cultured mesangial cells. Isoform 1 and isoform 2 are expressed in renal tissues.

Its function is as follows. Regulatory subunit of serine/threonine-protein phosphatase 4. May play a role in regulation of cell division in renal glomeruli. The PPP4C-PPP4R1 PP4 complex may play a role in dephosphorylation and regulation of HDAC3. Plays a role in the inhibition of TNF-induced NF-kappa-B activation by regulating the dephosphorylation of TRAF2. Functionally, (Microbial infection) Participates in merkel polyomavirus-mediated inhibition of NF-kappa-B by bridging viral small tumor antigen with NEMO. In Homo sapiens (Human), this protein is Serine/threonine-protein phosphatase 4 regulatory subunit 1 (PPP4R1).